Here is a 555-residue protein sequence, read N- to C-terminus: Zinc finger and SCAN domain-containing protein 21 (555 aa).

Disordered stretches follow at residues 1–74 (MTKV…SKDK), 102–133 (TIKA…YHDT), 204–243 (LDEP…TQHV), and 263–354 (EEVF…RPAP). Repeat copies occupy residues 18 to 56 (ESMG…QDTL), 57 to 95 (EPMG…QDTL), and 96 to 134 (EQLG…HDTP). Residues 18-134 (ESMGPSPIKV…FRQFGYHDTP (117 aa)) are 3 X 39 AA approximate tandem repeats. A Glycyl lysine isopeptide (Lys-Gly) (interchain with G-Cter in SUMO2) cross-link involves residue lysine 26. The SCAN box domain occupies 122-204 (RQRFRQFGYH…TLLEDLEQEL (83 aa)). Positions 210 to 240 (QVSSPPNEQKQSWEKMSTSGTAMESLSSTET) are enriched in polar residues. Over residues 280–302 (PQKEDSADEHRSSEEESHADGLK) the composition is skewed to basic and acidic residues. Glycyl lysine isopeptide (Lys-Gly) (interchain with G-Cter in SUMO2) cross-links involve residues lysine 302 and lysine 313. A compositionally biased stretch (basic and acidic residues) spans 316-332 (SRSERQWANNLERERGT). 7 C2H2-type zinc fingers span residues 359 to 381 (YICA…RRTH), 387 to 409 (YVCT…YRTH), 415 to 436 (YDCK…QRMH), 442 to 464 (YQCK…YRIH), 470 to 492 (YQCN…QRLH), 498 to 520 (YKCK…HRIH), and 526 to 548 (YWCS…QRVH). Lysine 431 is covalently cross-linked (Glycyl lysine isopeptide (Lys-Gly) (interchain with G-Cter in SUMO2)).

The protein belongs to the krueppel C2H2-type zinc-finger protein family. In terms of tissue distribution, expressed predominantly in the spermatocytes and spermatids of adult testes. It is also present at lower levels in the ovary, brain, spleen, embryo and fetus.

It is found in the nucleus. Functionally, strong transcriptional activator. Plays an important role in spermatogenesis; essential for the progression of meiotic prophase I in spermatocytes. This chain is Zinc finger and SCAN domain-containing protein 21 (Zscan21), found in Mus musculus (Mouse).